The following is a 426-amino-acid chain: Phosphomethylpyrimidine synthase (426 aa).

Substrate is bound by residues Asn65, Met94, Tyr123, His162, 184–186 (SRG), 225–228 (DGLR), and Glu264. Residue His268 coordinates Zn(2+). A substrate-binding site is contributed by Tyr291. His332 contacts Zn(2+). [4Fe-4S] cluster-binding residues include Cys409, Cys412, and Cys416.

Belongs to the ThiC family. The cofactor is [4Fe-4S] cluster.

It catalyses the reaction 5-amino-1-(5-phospho-beta-D-ribosyl)imidazole + S-adenosyl-L-methionine = 4-amino-2-methyl-5-(phosphooxymethyl)pyrimidine + CO + 5'-deoxyadenosine + formate + L-methionine + 3 H(+). It functions in the pathway cofactor biosynthesis; thiamine diphosphate biosynthesis. In terms of biological role, catalyzes the synthesis of the hydroxymethylpyrimidine phosphate (HMP-P) moiety of thiamine from aminoimidazole ribotide (AIR) in a radical S-adenosyl-L-methionine (SAM)-dependent reaction. This Thermodesulfovibrio yellowstonii (strain ATCC 51303 / DSM 11347 / YP87) protein is Phosphomethylpyrimidine synthase.